We begin with the raw amino-acid sequence, 169 residues long: Protein pid-1 (169 aa).

Positions 137–151 (SGSPRITPQKHTPVS) are enriched in polar residues. The interval 137-169 (SGSPRITPQKHTPVSANHKPARSIFDDIPSNIA) is disordered.

In terms of assembly, component of the pid-1 variant of the PETISCO complex (also called the pid-3, erh-2, tofu-6, and ife-3 small RNA complex) containing at least pid-1, tofu-6, ife-3, pid-3, and erh-2, which is required for the biogenesis of a class of 21 nucleotide PIWI-interacting RNAs (piRNAs) that possess a uracil residue at the 5'-end (also called 21U-RNAs). Within the complex interacts with pid-3; the interaction is direct. Within the complex interacts with erh-2. Within the complex interacts with tofu-6. As to expression, expressed predominantly in the germline (at protein level).

It localises to the cytoplasm. Its subcellular location is the nucleus. It is found in the perinuclear region. Functionally, component of the pid-1 variant of the PETISCO complex which is required for the biogenesis of a class of 21 nucleotide PIWI-interacting RNAs (piRNAs) that possess a uracil residue at the 5'-end (also called 21U-RNAs). Within the complex acts as an adapter which binds to the complex via erh-2. Involved in the biogenesis of 21U-RNAs which guide the piwi protein prg-1 to its DNA targets for silencing. Plays a role in small RNA-directed transgenerational epigenetic inheritance. The chain is Protein pid-1 from Caenorhabditis elegans.